The primary structure comprises 235 residues: Ribonuclease 3 (235 aa).

An RNase III domain is found at 6–131; the sequence is IDQLFKLTGH…LIAVMYLDGG (126 aa). Glu-44 lines the Mg(2+) pocket. Asp-48 is a catalytic residue. 2 residues coordinate Mg(2+): Asp-117 and Glu-120. Glu-120 is an active-site residue. One can recognise a DRBM domain in the interval 156 to 225; sequence DAKTELQEWA…AEKILRREGV (70 aa).

Belongs to the ribonuclease III family. As to quaternary structure, homodimer. The cofactor is Mg(2+).

It is found in the cytoplasm. The catalysed reaction is Endonucleolytic cleavage to 5'-phosphomonoester.. In terms of biological role, digests double-stranded RNA. Involved in the processing of primary rRNA transcript to yield the immediate precursors to the large and small rRNAs (23S and 16S). Processes some mRNAs, and tRNAs when they are encoded in the rRNA operon. Processes pre-crRNA and tracrRNA of type II CRISPR loci if present in the organism. The sequence is that of Ribonuclease 3 from Bartonella tribocorum (strain CIP 105476 / IBS 506).